We begin with the raw amino-acid sequence, 793 residues long: Serine/threonine-protein phosphatase 1 regulatory subunit GAC1 (793 aa).

Residues Met-1–Ser-10 are compositionally biased toward polar residues. The disordered stretch occupies residues Met-1–His-20. Residues Thr-235–Phe-360 form the CBM21 domain. Phosphoserine occurs at positions 415 and 424. 2 disordered regions span residues Leu-450–Leu-491 and Thr-616–His-671. Residues Lys-623–Thr-633 show a composition bias toward polar residues. A compositionally biased stretch (basic and acidic residues) spans Pro-637 to Lys-648. The segment covering Ser-649–Ser-665 has biased composition (low complexity).

Regulates the activity of glycogen synthase. It is most probably a regulatory subunit for protein phosphatase type 1. This chain is Serine/threonine-protein phosphatase 1 regulatory subunit GAC1 (GAC1), found in Saccharomyces cerevisiae (strain ATCC 204508 / S288c) (Baker's yeast).